The sequence spans 257 residues: Deoxyribose-phosphate aldolase (257 aa).

D102 (proton donor/acceptor) is an active-site residue. K165 serves as the catalytic Schiff-base intermediate with acetaldehyde. K199 functions as the Proton donor/acceptor in the catalytic mechanism.

The protein belongs to the DeoC/FbaB aldolase family. DeoC type 2 subfamily.

The protein resides in the cytoplasm. It carries out the reaction 2-deoxy-D-ribose 5-phosphate = D-glyceraldehyde 3-phosphate + acetaldehyde. It functions in the pathway carbohydrate degradation; 2-deoxy-D-ribose 1-phosphate degradation; D-glyceraldehyde 3-phosphate and acetaldehyde from 2-deoxy-alpha-D-ribose 1-phosphate: step 2/2. In terms of biological role, catalyzes a reversible aldol reaction between acetaldehyde and D-glyceraldehyde 3-phosphate to generate 2-deoxy-D-ribose 5-phosphate. The chain is Deoxyribose-phosphate aldolase from Photobacterium profundum (strain SS9).